Consider the following 1189-residue polypeptide: Zinc finger CCCH domain-containing protein 6 (1189 aa).

The segment covering 1–12 has biased composition (basic and acidic residues); sequence MTDSEHAGHDRE. The tract at residues 1–105 is disordered; the sequence is MTDSEHAGHD…HKKRTGFYRD (105 aa). A compositionally biased stretch (acidic residues) spans 13–28; it reads DGELEDGEIDDAGFEE. The stretch at 27–73 forms a coiled coil; sequence EEIQEKEAKENEKQKSEKAYRKSRKKHKKEREKKKSKRRKREKHKHN. Basic and acidic residues predominate over residues 29–46; it reads IQEKEAKENEKQKSEKAY. The span at 47–73 shows a compositional bias: basic residues; sequence RKSRKKHKKEREKKKSKRRKREKHKHN. 3 C3H1-type zinc fingers span residues 273 to 299, 301 to 328, and 329 to 352; these read KGKQ…HDAE, EKRK…HNEF, and PCKF…HDDL. Residues 353-385 adopt a coiled-coil conformation; the sequence is TKETKKLLDKVLNTDEELINEDERELEELRKRG. Disordered stretches follow at residues 451–530, 630–659, 676–755, 947–1026, and 1051–1189; these read FYTS…GPQN, PPVV…PVPG, YQED…GNQV, LEQF…PYAP, and PRDH…SPFC. The span at 461–478 shows a compositional bias: low complexity; sequence QFQGSSPHPQHIYSSGSS. A compositionally biased stretch (pro residues) spans 505 to 525; it reads AGPPGLPVPQSPPLPPGPPEI. Over residues 639 to 659 the composition is skewed to low complexity; it reads HGSGSDGSSTRTGHGPLPVPG. Polar residues predominate over residues 718–741; that stretch reads KTLQKQTETLRNQQQPSTELSTPT. Residues 961 to 973 are compositionally biased toward basic and acidic residues; that stretch reads GDPRLQKNFDPRL. Low complexity-rich tracts occupy residues 1009–1020 and 1056–1069; these read SGAGTSNSGSGA and SSST…SSGE. Ser-1158 carries the post-translational modification Phosphoserine. Residues 1164–1179 are compositionally biased toward basic and acidic residues; it reads DPGRETDDKSLKEVFK.

This Homo sapiens (Human) protein is Zinc finger CCCH domain-containing protein 6 (ZC3H6).